The sequence spans 164 residues: Hoefavidin (164 aa).

Positions 1 to 22 (MNKVLAIVLTITVAGFAQTAFA) are cleaved as a signal peptide. In terms of domain architecture, Avidin-like spans 32–155 (KLLAGASNWV…GQDDFMQSVA (124 aa)). Residues asparagine 42, serine 46, tyrosine 68, asparagine 70, and glycine 76 each contribute to the biotin site. Residues cysteine 77 and cysteine 108 are joined by a disulfide bond. The biotin site is built by serine 110, threonine 112, and aspartate 148.

The protein belongs to the avidin/streptavidin family. As to quaternary structure, exhibits a dynamic oligomeric assembly: the apo form exits as homooctamers, which dissociate into homodimers upon biotin binding. The X-ray structure of the intact hoefavidin reveals unique crystal packing generated by an octameric cylindrical structure wherein the C-terminal segments of each monomer are introduced into the entrance of the biotin-binding site of an adjacent non-canonical monomer.

It is found in the secreted. The exact role played by hoefavidin in the host organism is still obscure. Forms a strong non-covalent complex with biotin and 2-iminobiotin. The protein is Hoefavidin of Hoeflea phototrophica (strain DSM 17068 / NCIMB 14078 / DFL-43).